Reading from the N-terminus, the 288-residue chain is Diaminopimelate epimerase (288 aa).

Residues asparagine 13, glutamine 46, and asparagine 66 each coordinate substrate. The Proton donor role is filled by cysteine 75. Residues 76 to 77, asparagine 166, asparagine 199, and 217 to 218 contribute to the substrate site; these read GN and ER. Cysteine 226 serves as the catalytic Proton acceptor. Residue 227–228 coordinates substrate; sequence GT.

It belongs to the diaminopimelate epimerase family. As to quaternary structure, homodimer.

The protein localises to the cytoplasm. The catalysed reaction is (2S,6S)-2,6-diaminopimelate = meso-2,6-diaminopimelate. It participates in amino-acid biosynthesis; L-lysine biosynthesis via DAP pathway; DL-2,6-diaminopimelate from LL-2,6-diaminopimelate: step 1/1. Its function is as follows. Catalyzes the stereoinversion of LL-2,6-diaminopimelate (L,L-DAP) to meso-diaminopimelate (meso-DAP), a precursor of L-lysine and an essential component of the bacterial peptidoglycan. This Cupriavidus necator (strain ATCC 17699 / DSM 428 / KCTC 22496 / NCIMB 10442 / H16 / Stanier 337) (Ralstonia eutropha) protein is Diaminopimelate epimerase.